The chain runs to 259 residues: Proteasome subunit alpha (259 aa).

The tract at residues 226 to 259 (LAEGSATSATSATPGEAEAPATAPEGDVDTGSNG) is disordered. The segment covering 227–250 (AEGSATSATSATPGEAEAPATAPE) has biased composition (low complexity).

It belongs to the peptidase T1A family. As to quaternary structure, the 20S proteasome core is composed of 14 alpha and 14 beta subunits that assemble into four stacked heptameric rings, resulting in a barrel-shaped structure. The two inner rings, each composed of seven catalytic beta subunits, are sandwiched by two outer rings, each composed of seven alpha subunits. The catalytic chamber with the active sites is on the inside of the barrel. Has a gated structure, the ends of the cylinder being occluded by the N-termini of the alpha-subunits. Is capped by the proteasome-associated ATPase, ARC.

The protein resides in the cytoplasm. It functions in the pathway protein degradation; proteasomal Pup-dependent pathway. Its activity is regulated as follows. The formation of the proteasomal ATPase ARC-20S proteasome complex, likely via the docking of the C-termini of ARC into the intersubunit pockets in the alpha-rings, may trigger opening of the gate for substrate entry. Interconversion between the open-gate and close-gate conformations leads to a dynamic regulation of the 20S proteasome proteolysis activity. Functionally, component of the proteasome core, a large protease complex with broad specificity involved in protein degradation. The sequence is that of Proteasome subunit alpha from Streptosporangium roseum (strain ATCC 12428 / DSM 43021 / JCM 3005 / KCTC 9067 / NCIMB 10171 / NRRL 2505 / NI 9100).